The primary structure comprises 757 residues: Serine/threonine-protein phosphatase 2A 56 kDa regulatory subunit delta isoform (757 aa).

The span at 1–11 shows a compositional bias: basic residues; sequence MMRGFKQRLIK. Disordered stretches follow at residues 1–172 and 188–250; these read MMRG…EDHA and ISNA…NPDT. The segment covering 12-21 has biased composition (low complexity); sequence KTTGSSSSSS. The segment covering 23 to 34 has biased composition (basic and acidic residues); the sequence is KKKDKEKEKEKS. Low complexity-rich tracts occupy residues 35 to 66, 86 to 119, and 128 to 147; these read STTSSTSKKPASASSSSHGTTHSSASSTGSKS, SSTSKTKTATTPSSSSSSSRSSSVSRSGSSSTKK, and QSKQSQQPSQSQKQGSSSSS. The segment covering 160 to 172 has biased composition (basic and acidic residues); it reads TKDDKSTSGEDHA. A compositionally biased stretch (low complexity) spans 197 to 216; it reads SSDVENGNSNNNNMNINTSN. Residues 217 to 228 are compositionally biased toward polar residues; sequence TQDANHASSQSI. Phosphothreonine is present on residues T242 and T257. The segment at 734–757 is disordered; that stretch reads SFNTASENNTLNEENENDCDSEIQ. Residues 746–757 show a composition bias toward acidic residues; it reads EENENDCDSEIQ.

The protein belongs to the phosphatase 2A regulatory subunit B family. PP2A consists of a common heterodimeric core enzyme, composed of a 36 kDa catalytic subunit (subunit C) and a 65 kDa constant regulatory subunit (PR65 or subunit A), that associates with a variety of regulatory subunits. Proteins that associate with the core dimer include three families of regulatory subunits B (the R2/B/PR55/B55, R3/B''/PR72/PR130/PR59 and R5/B'/B56 families), the 48 kDa variable regulatory subunit, viral proteins, and cell signaling molecules.

Its subcellular location is the cytoplasm. It localises to the nucleus. In terms of biological role, the B regulatory subunit might modulate substrate selectivity and catalytic activity, and might also direct the localization of the catalytic enzyme to a particular subcellular compartment. Functionally, multicopy suppressor of ROX3 and HSP60. The polypeptide is Serine/threonine-protein phosphatase 2A 56 kDa regulatory subunit delta isoform (RTS1) (Saccharomyces cerevisiae (strain ATCC 204508 / S288c) (Baker's yeast)).